The sequence spans 300 residues: Geranylgeranyl pyrophosphate synthase (300 aa).

N-acetylmethionine is present on Met-1. Isopentenyl diphosphate is bound by residues Lys-25, Arg-28, and His-57. Mg(2+) contacts are provided by Asp-64 and Asp-68. Arg-73 contributes to the dimethylallyl diphosphate binding site. Position 74 (Arg-74) interacts with isopentenyl diphosphate. Dimethylallyl diphosphate contacts are provided by Lys-151, Thr-152, Gln-185, Lys-202, and Lys-212.

The protein belongs to the FPP/GGPP synthase family. As to quaternary structure, homohexamer; trimer of homodimers. Mg(2+) is required as a cofactor.

The protein resides in the cytoplasm. It is found in the perinuclear region. The protein localises to the myofibril. It localises to the sarcomere. Its subcellular location is the z line. It catalyses the reaction isopentenyl diphosphate + dimethylallyl diphosphate = (2E)-geranyl diphosphate + diphosphate. The enzyme catalyses isopentenyl diphosphate + (2E)-geranyl diphosphate = (2E,6E)-farnesyl diphosphate + diphosphate. It carries out the reaction isopentenyl diphosphate + (2E,6E)-farnesyl diphosphate = (2E,6E,10E)-geranylgeranyl diphosphate + diphosphate. It functions in the pathway isoprenoid biosynthesis; farnesyl diphosphate biosynthesis; farnesyl diphosphate from geranyl diphosphate and isopentenyl diphosphate: step 1/1. It participates in isoprenoid biosynthesis; geranyl diphosphate biosynthesis; geranyl diphosphate from dimethylallyl diphosphate and isopentenyl diphosphate: step 1/1. Its pathway is isoprenoid biosynthesis; geranylgeranyl diphosphate biosynthesis; geranylgeranyl diphosphate from farnesyl diphosphate and isopentenyl diphosphate: step 1/1. Its function is as follows. Catalyzes the trans-addition of the three molecules of isopentenyl diphosphate (IPP) onto dimethylallyl pyrophosphate (DMAPP) to form geranylgeranyl pyrophosphate, an important precursor of carotenoids and geranylated proteins. The sequence is that of Geranylgeranyl pyrophosphate synthase from Mus musculus (Mouse).